The chain runs to 1157 residues: Pesticidal crystal protein Cry9Ca (1157 aa).

The protein belongs to the delta endotoxin family.

Promotes colloidosmotic lysis by binding to the midgut epithelial cells of Lepidoptera larvae. Has a fairly broad spectrum of activity against members of the Pyralidae, Plutellidae, Sphingidae and Noctuidae families. It was the first insecticidal crystal protein characterized with activity against cutworms. No activity is observed against some beetles, such as the Colorado potato beetle. This chain is Pesticidal crystal protein Cry9Ca (cry9Ca), found in Bacillus thuringiensis subsp. tolworthi.